The chain runs to 204 residues: Methylthioribulose-1-phosphate dehydratase (204 aa).

Zn(2+) contacts are provided by histidine 96 and histidine 98.

It belongs to the aldolase class II family. MtnB subfamily. The cofactor is Zn(2+).

It catalyses the reaction 5-(methylsulfanyl)-D-ribulose 1-phosphate = 5-methylsulfanyl-2,3-dioxopentyl phosphate + H2O. It functions in the pathway amino-acid biosynthesis; L-methionine biosynthesis via salvage pathway; L-methionine from S-methyl-5-thio-alpha-D-ribose 1-phosphate: step 2/6. Functionally, catalyzes the dehydration of methylthioribulose-1-phosphate (MTRu-1-P) into 2,3-diketo-5-methylthiopentyl-1-phosphate (DK-MTP-1-P). The protein is Methylthioribulose-1-phosphate dehydratase of Methylococcus capsulatus (strain ATCC 33009 / NCIMB 11132 / Bath).